The primary structure comprises 195 residues: Putative inactive carbonic anhydrase 5B-like protein (195 aa).

Residue 121–122 (TT) participates in substrate binding.

The protein belongs to the alpha-carbonic anhydrase family.

The sequence is that of Putative inactive carbonic anhydrase 5B-like protein (CA5BP1) from Homo sapiens (Human).